Consider the following 943-residue polypeptide: Nuclear factor of activated T-cells, cytoplasmic 1 (943 aa).

Residues 22–48 (GRGETLGPAPRAGGTMKSAEEEHYGYA) are disordered. The calcineurin-binding stretch occupies residues 118–123 (PRIEIT). The interval 126 to 218 (LGLYHNNNQF…CVSPKTTDPE (93 aa)) is transactivation domain A (TAD-A). The interval 200-298 (PQTSPWQSPC…GSPRVSVTDD (99 aa)) is disordered. Residues 201–214 (QTSPWQSPCVSPKT) are compositionally biased toward polar residues. Tandem repeats lie at residues 203 to 219 (SPWQSPCVSPKTTDPEE) and 233 to 249 (SPRHSPSTSPRASVTEE). The segment at 203–298 (SPWQSPCVSP…GSPRVSVTDD (96 aa)) is 3 X SP repeats. 2 positions are modified to phosphoserine: Ser233 and Ser237. Positions 236–248 (HSPSTSPRASVTE) are enriched in polar residues. Ser245 bears the Phosphoserine; by PKA mark. Positions 265–267 (KRK) match the Nuclear localization signal motif. Ser269 carries the post-translational modification Phosphoserine; by PKA. Over residues 276–288 (PYSPHHSPTPSPH) the composition is skewed to pro residues. Copy 3 of the repeat occupies 282 to 298 (SPTPSPHGSPRVSVTDD). Ser294 carries the post-translational modification Phosphoserine; by PKA. The Nuclear export signal motif lies at 310-321 (SAIVAAINALTT). Residues 410-592 (PTLPALDWQL…NPIECSQRSA (183 aa)) form the RHD domain. The DNA-binding element occupies 439 to 446 (RAHYETEG). The short motif at 682–684 (KRK) is the Nuclear localization signal element. The tract at residues 703 to 943 (TEPTDDYEPA…NDLSSTSTHS (241 aa)) is transactivation domain B (TAD-B). Positions 787–912 (HLGLPQPAGE…SPNLAPIPVT (126 aa)) are disordered. The span at 846 to 855 (SPSPPLPPAT) shows a compositional bias: pro residues. The short motif at 924–933 (YLDDVNEIIR) is the Nuclear export signal element.

In terms of assembly, member of the multicomponent NFATC transcription complex that consists of at least two components, a pre-existing cytoplasmic component NFATC2 and an inducible nuclear component NFATC1. Other members such as NFATC4, NFATC3 or members of the activating protein-1 family, MAF, GATA4 and Cbp/p300 can also bind the complex. NFATC proteins bind to DNA as monomers. Interacts with HOMER2 and HOMER3; this interaction may compete with calcineurin/PPP3CA-binding and hence prevent NFATC1 dephosphorylation and activation. Interacts with TLE6/GRG6. In terms of processing, phosphorylated by NFATC-kinase and GSK3B; phosphorylation induces NFATC1 nuclear exit and dephosphorylation by calcineurin promotes nuclear import. Phosphorylation by PKA and DYRK2 negatively modulates nuclear accumulation, and promotes subsequent phosphorylation by GSK3B or casein kinase 1. In terms of tissue distribution, expressed in thymus, peripheral leukocytes as T-cells and spleen. Isoforms A are preferentially expressed in effector T-cells (thymus and peripheral leukocytes) whereas isoforms B and isoforms C are preferentially expressed in naive T-cells (spleen). Isoforms B are expressed in naive T-cells after first antigen exposure and isoforms A are expressed in effector T-cells after second antigen exposure. Isoforms IA are widely expressed but not detected in liver nor pancreas, neural expression is strongest in corpus callosum. Isoforms IB are expressed mostly in muscle, cerebellum, placenta and thymus, neural expression in fetal and adult brain, strongest in corpus callosum.

Its subcellular location is the cytoplasm. It is found in the nucleus. Plays a role in the inducible expression of cytokine genes in T-cells, especially in the induction of the IL-2 or IL-4 gene transcription. Also controls gene expression in embryonic cardiac cells. Could regulate not only the activation and proliferation but also the differentiation and programmed death of T-lymphocytes as well as lymphoid and non-lymphoid cells. Required for osteoclastogenesis and regulates many genes important for osteoclast differentiation and function. The sequence is that of Nuclear factor of activated T-cells, cytoplasmic 1 (NFATC1) from Homo sapiens (Human).